Consider the following 496-residue polypeptide: Probable cytosol aminopeptidase (496 aa).

Residues lysine 267 and aspartate 272 each coordinate Mn(2+). Lysine 279 is an active-site residue. Mn(2+) is bound by residues aspartate 290, aspartate 349, and glutamate 351. Arginine 353 is an active-site residue.

It belongs to the peptidase M17 family. It depends on Mn(2+) as a cofactor.

It is found in the cytoplasm. The enzyme catalyses Release of an N-terminal amino acid, Xaa-|-Yaa-, in which Xaa is preferably Leu, but may be other amino acids including Pro although not Arg or Lys, and Yaa may be Pro. Amino acid amides and methyl esters are also readily hydrolyzed, but rates on arylamides are exceedingly low.. It carries out the reaction Release of an N-terminal amino acid, preferentially leucine, but not glutamic or aspartic acids.. Presumably involved in the processing and regular turnover of intracellular proteins. Catalyzes the removal of unsubstituted N-terminal amino acids from various peptides. This Methylobacillus flagellatus (strain ATCC 51484 / DSM 6875 / VKM B-1610 / KT) protein is Probable cytosol aminopeptidase.